Reading from the N-terminus, the 954-residue chain is Isoleucine--tRNA ligase (954 aa).

The 'HIGH' region motif lies at 60–70; it reads PYANGALHMGH. E564 lines the L-isoleucyl-5'-AMP pocket. The 'KMSKS' region motif lies at 605-609; it reads KMSKS. K608 is an ATP binding site. The Zn(2+) site is built by C923, C926, C943, and C946.

Belongs to the class-I aminoacyl-tRNA synthetase family. IleS type 1 subfamily. In terms of assembly, monomer. Zn(2+) serves as cofactor.

The protein resides in the cytoplasm. It carries out the reaction tRNA(Ile) + L-isoleucine + ATP = L-isoleucyl-tRNA(Ile) + AMP + diphosphate. Its function is as follows. Catalyzes the attachment of isoleucine to tRNA(Ile). As IleRS can inadvertently accommodate and process structurally similar amino acids such as valine, to avoid such errors it has two additional distinct tRNA(Ile)-dependent editing activities. One activity is designated as 'pretransfer' editing and involves the hydrolysis of activated Val-AMP. The other activity is designated 'posttransfer' editing and involves deacylation of mischarged Val-tRNA(Ile). This is Isoleucine--tRNA ligase from Synechococcus sp. (strain ATCC 27144 / PCC 6301 / SAUG 1402/1) (Anacystis nidulans).